Here is a 41-residue protein sequence, read N- to C-terminus: Plantazolicin (41 aa).

Positions 1–27 are excised as a propeptide; that stretch reads MTQIKVPTALIASVHGEGQHLFEPMAA. Arginine 28 carries the post-translational modification N2,N2-dimethylarginine. A cross-link (thiazole-4-carboxylic acid (Arg-Cys)) is located at residues 28–29; it reads RC. Cross-links (5-methyloxazole-4-carboxylic acid (Cys-Thr)) lie at residues 29-30 and 31-32; these read CT. The segment at residues 30 to 31 is a cross-link (thiazole-4-carboxylic acid (Thr-Cys)); it reads TC. The segment at residues 32 to 33 is a cross-link (5-methyloxazole-4-carboxylic acid (Thr-Thr)); that stretch reads TT. Residues 35–36 constitute a cross-link (oxazole-4-carboxylic acid (Ile-Ser)); that stretch reads IS. 3 cross-links (oxazole-4-carboxylic acid (Ser-Ser)) span residues 36 to 37, 37 to 38, and 38 to 39; these read SS. The 5-methyloxazoline-4-carboxylic acid (Ser-Thr) cross-link spans 39–40; that stretch reads ST.

In terms of processing, maturation of thiazole and oxazole containing antibiotics involves the enzymatic condensation of a Cys, Ser or Thr with the alpha-carbonyl of the preceding amino acid to form a thioether or ether bond, then dehydration to form a double bond with the alpha-amino nitrogen. Thiazoline or oxazoline ring are dehydrogenated to form thiazole or oxazole rings. 2 forms exist: plantazolicin A and plantazolicin B. The structural difference between them is a dimethylation at Arg-28 in plantazolicin A.

The protein resides in the secreted. It is found in the cell wall. Functionally, peptide antibiotic inhibiting growth of Gram-positive bacteria in the dimethylated form plantazolicin A. The desmethyl form plantazolicin B has no antibiotic activity. The mode of action appears to be disruption of cell walls and lysis of cells. Inhibits B.subtilis strain HB0042, B.megaterium strain 7A1 and B.anthracis (MIC=2-4 ug/ml). Weakly inhibits Gram-positive bacteria B.brevis strain ATCC 8246, B.subtilis strain 168, B.cereus strain ATCC 14579 and strain CU1065, B.licheniformis strain ATCC 9789, M.luteus, B.sphaericus, P.granivorans and S.pyogenes (MIC=128 ug/ml). Does not inhibit B.pumilus, P.polymyxa, Arthrobacter sp., S.aureus, vancomycin-resistant E.faecalis, L.monocytogenes, methicillin-resistant S.aureus or Gram-negative bacteria E.coli strain K12, K.terrigena, Pseudomonas sp. and E.carotovora. The chain is Plantazolicin from Bacillus velezensis (strain DSM 23117 / BGSC 10A6 / LMG 26770 / FZB42) (Bacillus amyloliquefaciens subsp. plantarum).